Consider the following 102-residue polypeptide: Protein PAPPAS (102 aa).

The next 2 membrane-spanning stretches (helical) occupy residues 13–33 and 82–102; these read LFLTTVAALPIWNPISEFVKW and IGSDIIWWFLKLFLVSFFFFF.

As to expression, expressed in placenta with lower expression in brain, kidney and testis.

Its subcellular location is the endoplasmic reticulum membrane. This is Protein PAPPAS (PAPPA-AS1) from Homo sapiens (Human).